Reading from the N-terminus, the 138-residue chain is ATP synthase epsilon chain (138 aa).

The protein belongs to the ATPase epsilon chain family. In terms of assembly, F-type ATPases have 2 components, CF(1) - the catalytic core - and CF(0) - the membrane proton channel. CF(1) has five subunits: alpha(3), beta(3), gamma(1), delta(1), epsilon(1). CF(0) has three main subunits: a, b and c.

It is found in the cell inner membrane. Its function is as follows. Produces ATP from ADP in the presence of a proton gradient across the membrane. This chain is ATP synthase epsilon chain, found in Geobacter sulfurreducens (strain ATCC 51573 / DSM 12127 / PCA).